The sequence spans 215 residues: Large ribosomal subunit protein uL3 (215 aa).

The interval 136–155 (GVSISHRSHGSTGQRQDPGK) is disordered. Q151 carries the post-translational modification N5-methylglutamine.

The protein belongs to the universal ribosomal protein uL3 family. In terms of assembly, part of the 50S ribosomal subunit. Forms a cluster with proteins L14 and L19. Methylated by PrmB.

Functionally, one of the primary rRNA binding proteins, it binds directly near the 3'-end of the 23S rRNA, where it nucleates assembly of the 50S subunit. The chain is Large ribosomal subunit protein uL3 from Rickettsia canadensis (strain McKiel).